We begin with the raw amino-acid sequence, 766 residues long: 5-methyltetrahydropteroyltriglutamate--homocysteine methyltransferase (766 aa).

Residues 16 to 19 and lysine 119 contribute to the 5-methyltetrahydropteroyltri-L-glutamate site; that span reads RELK. Residues 440-442 and glutamate 493 each bind L-homocysteine; that span reads IGS. L-methionine contacts are provided by residues 440–442 and glutamate 493; that span reads IGS. 5-methyltetrahydropteroyltri-L-glutamate is bound by residues 524–525 and tryptophan 570; that span reads RC. Aspartate 608 provides a ligand contact to L-homocysteine. Residue aspartate 608 coordinates L-methionine. Glutamate 614 contributes to the 5-methyltetrahydropteroyltri-L-glutamate binding site. Zn(2+) contacts are provided by histidine 650, cysteine 652, and glutamate 674. Histidine 703 acts as the Proton donor in catalysis. Zn(2+) is bound at residue cysteine 735.

It belongs to the vitamin-B12 independent methionine synthase family. Requires Zn(2+) as cofactor.

The enzyme catalyses 5-methyltetrahydropteroyltri-L-glutamate + L-homocysteine = tetrahydropteroyltri-L-glutamate + L-methionine. The protein operates within amino-acid biosynthesis; L-methionine biosynthesis via de novo pathway; L-methionine from L-homocysteine (MetE route): step 1/1. In terms of biological role, catalyzes the transfer of a methyl group from 5-methyltetrahydrofolate to homocysteine resulting in methionine formation. In Pseudomonas aeruginosa (strain UCBPP-PA14), this protein is 5-methyltetrahydropteroyltriglutamate--homocysteine methyltransferase.